We begin with the raw amino-acid sequence, 318 residues long: Isoflavone reductase (318 aa).

NADP(+)-binding positions include Gly11 to Gly17, Arg36, and Lys44. The active-site Proton acceptor is the Lys144. Residue Arg148 participates in NADP(+) binding.

This sequence belongs to the NmrA-type oxidoreductase family. Isoflavone reductase subfamily.

It catalyses the reaction (3R)-vestitone + NADP(+) = 2'-hydroxyformononetin + NADPH + 2 H(+). Its pathway is phytoalexin biosynthesis; pterocarpan phytoalexin biosynthesis. Functionally, reduces achiral isoflavones to chiral isoflavanones during the biosynthesis of chiral pterocarpan phytoalexins. This is Isoflavone reductase (IFR) from Cicer arietinum (Chickpea).